Reading from the N-terminus, the 177-residue chain is Phosphatidylglycerol/phosphatidylinositol transfer protein (177 aa).

Positions 1-17 (MRLSAAVIALLSTSAAA) are cleaved as a signal peptide. The propeptide occupies 18–30 (FSVYRENSVSAND).

It belongs to the NPC2 family. Monomer.

In terms of biological role, catalyzes the intermembrane transfer of phosphatidylglycerol and phosphatidylinositol. The protein is Phosphatidylglycerol/phosphatidylinositol transfer protein (npc-2) of Neurospora crassa (strain ATCC 24698 / 74-OR23-1A / CBS 708.71 / DSM 1257 / FGSC 987).